A 200-amino-acid chain; its full sequence is Ribosome maturation factor RimM (200 aa).

A PRC barrel domain is found at 103–181; it reads KEGEYYFYQL…KIVAKRLEYL (79 aa).

The protein belongs to the RimM family. As to quaternary structure, binds ribosomal protein uS19.

Its subcellular location is the cytoplasm. An accessory protein needed during the final step in the assembly of 30S ribosomal subunit, possibly for assembly of the head region. Essential for efficient processing of 16S rRNA. May be needed both before and after RbfA during the maturation of 16S rRNA. It has affinity for free ribosomal 30S subunits but not for 70S ribosomes. In Kosmotoga olearia (strain ATCC BAA-1733 / DSM 21960 / TBF 19.5.1), this protein is Ribosome maturation factor RimM.